A 718-amino-acid polypeptide reads, in one-letter code: Adhesin-like cell surface protein MAD1 (718 aa).

A signal peptide spans 1–19 (MKGAIQFLGALAAVQAVSA). Repeat copies occupy residues 217-243 (PCTE…TEPA), 244-265 (PCTE…TEPA), 266-282 (PCTE…TEPA), 283-309 (PCTE…TEPA), 310-336 (PCTE…TEPA), 337-358 (PCTE…TEPA), 359-382 (PCTE…TDEA), 383-402 (PCTD…TDEA), and 403-420 (PCTE…AVPT). The interval 452–472 (TSIPYETPSPSETETLPPSGT) is disordered. The CFEM domain maps to 462-575 (SETETLPPSG…VTLPPVTTGA (114 aa)). Disulfide bonds link cysteine 494/cysteine 526, cysteine 504/cysteine 512, and cysteine 514/cysteine 548. Heme is bound at residue aspartate 509. A lipid anchor (GPI-anchor amidated glycine) is attached at glycine 693. Residues 694–718 (AASSFKAFSTVMLAGVIGLTALIMA) constitute a propeptide, removed in mature form.

This sequence belongs to the RBT5 family. Post-translationally, the GPI-anchor is attached to the protein in the endoplasmic reticulum and serves to target the protein to the cell surface. There, the glucosamine-inositol phospholipid moiety is cleaved off and the GPI-modified mannoprotein is covalently attached via its lipidless GPI glycan remnant to the 1,6-beta-glucan of the outer cell wall layer.

The protein resides in the secreted. It is found in the cell wall. It localises to the cell membrane. In terms of biological role, cell surface adhesion protein that plays a key role in switching between the saprophytic lifestyle and the predacious lifestyle (nematode trapping). Likely functions to prevent energy-consuming trap formation in the absence of nematodes, and keeps the fungus in the saprophytic life style. May influence the induction signal of trap formation by limiting the porosity of the cell wall and thus affecting its permeability of nitrogen source. In Arthrobotrys oligospora (strain ATCC 24927 / CBS 115.81 / DSM 1491) (Nematode-trapping fungus), this protein is Adhesin-like cell surface protein MAD1.